The chain runs to 242 residues: Probable transcriptional regulatory protein XOO1543 (242 aa).

It belongs to the TACO1 family.

It is found in the cytoplasm. This chain is Probable transcriptional regulatory protein XOO1543, found in Xanthomonas oryzae pv. oryzae (strain MAFF 311018).